A 39-amino-acid polypeptide reads, in one-letter code: MNSTGRIPLWLVVTFGGIVVLTVLGIFIYGSYSGLGSSL.

Residues Leu-9 to Tyr-29 traverse the membrane as a helical segment.

The protein belongs to the PsbJ family. PSII is composed of 1 copy each of membrane proteins PsbA, PsbB, PsbC, PsbD, PsbE, PsbF, PsbH, PsbI, PsbJ, PsbK, PsbL, PsbM, PsbT, PsbY, PsbZ, Psb30/Ycf12, at least 3 peripheral proteins of the oxygen-evolving complex and a large number of cofactors. It forms dimeric complexes.

It localises to the plastid. The protein resides in the chloroplast thylakoid membrane. One of the components of the core complex of photosystem II (PSII). PSII is a light-driven water:plastoquinone oxidoreductase that uses light energy to abstract electrons from H(2)O, generating O(2) and a proton gradient subsequently used for ATP formation. It consists of a core antenna complex that captures photons, and an electron transfer chain that converts photonic excitation into a charge separation. The polypeptide is Photosystem II reaction center protein J (Cyanidium caldarium (Red alga)).